We begin with the raw amino-acid sequence, 41 residues long: U-megalopygitoxin(4)-Mo5 (41 aa).

A signal peptide spans 1–23; sequence MKCSLLLVVFAAMVALFAAGTNA.

Belongs to the caterpillar 4 family. In terms of tissue distribution, expressed by the venom apparatus.

The protein localises to the secreted. Functionally, probable toxin. In Megalopyge opercularis (Southern flannel moth), this protein is U-megalopygitoxin(4)-Mo5.